Here is a 409-residue protein sequence, read N- to C-terminus: Elongation factor Tu, chloroplastic (409 aa).

Residues 10–214 (KPHVNIGTIG…TVDAYIPTPE (205 aa)) enclose the tr-type G domain. Residues 19–26 (GHVDHGKT) form a G1 region. A GTP-binding site is contributed by 19–26 (GHVDHGKT). Thr26 is a binding site for Mg(2+). Residues 60 to 64 (GITIN) form a G2 region. Residues 81-84 (DCPG) form a G3 region. Residues 81 to 85 (DCPGH) and 136 to 139 (NKED) contribute to the GTP site. The segment at 136 to 139 (NKED) is G4. Residues 174-176 (SAL) form a G5 region.

Belongs to the TRAFAC class translation factor GTPase superfamily. Classic translation factor GTPase family. EF-Tu/EF-1A subfamily.

It localises to the plastid. Its subcellular location is the chloroplast. The enzyme catalyses GTP + H2O = GDP + phosphate + H(+). GTP hydrolase that promotes the GTP-dependent binding of aminoacyl-tRNA to the A-site of ribosomes during protein biosynthesis. This is Elongation factor Tu, chloroplastic (tufA) from Pleurastrum terricola (Filamentous green alga).